We begin with the raw amino-acid sequence, 132 residues long: uncharacterized protein (132 aa).

This is an uncharacterized protein from Mycoplasma genitalium (strain ATCC 33530 / DSM 19775 / NCTC 10195 / G37) (Mycoplasmoides genitalium).